The chain runs to 96 residues: Co-chaperonin GroES (96 aa).

The protein belongs to the GroES chaperonin family. In terms of assembly, heptamer of 7 subunits arranged in a ring. Interacts with the chaperonin GroEL.

Its subcellular location is the cytoplasm. Functionally, together with the chaperonin GroEL, plays an essential role in assisting protein folding. The GroEL-GroES system forms a nano-cage that allows encapsulation of the non-native substrate proteins and provides a physical environment optimized to promote and accelerate protein folding. GroES binds to the apical surface of the GroEL ring, thereby capping the opening of the GroEL channel. This is Co-chaperonin GroES from Ralstonia nicotianae (strain ATCC BAA-1114 / GMI1000) (Ralstonia solanacearum).